A 339-amino-acid chain; its full sequence is tRNA N6-adenosine threonylcarbamoyltransferase (339 aa).

2 residues coordinate Fe cation: His-107 and His-111. Residues 129 to 133 (LVSGG), Asp-162, Gly-175, and Asn-279 contribute to the substrate site. Residue Asp-307 participates in Fe cation binding.

It belongs to the KAE1 / TsaD family. Fe(2+) is required as a cofactor.

Its subcellular location is the cytoplasm. The catalysed reaction is L-threonylcarbamoyladenylate + adenosine(37) in tRNA = N(6)-L-threonylcarbamoyladenosine(37) in tRNA + AMP + H(+). Functionally, required for the formation of a threonylcarbamoyl group on adenosine at position 37 (t(6)A37) in tRNAs that read codons beginning with adenine. Is involved in the transfer of the threonylcarbamoyl moiety of threonylcarbamoyl-AMP (TC-AMP) to the N6 group of A37, together with TsaE and TsaB. TsaD likely plays a direct catalytic role in this reaction. The chain is tRNA N6-adenosine threonylcarbamoyltransferase from Campylobacter curvus (strain 525.92).